The chain runs to 135 residues: Biglycan (135 aa).

LRR repeat units follow at residues 4-24 (KLNYLRISEAKLTGIPKDLPE), 25-46 (TLNELHLDHNKIQAIELEDLLR), 49-72 (KLYRLGLGHNQIRMIENGSLSFLP), 73-95 (TLRELHLDNNKLSRVPAGLPDLK), and 96-117 (LLQVVYLHSNNITKVGVNDFCP). An N-linked (GlcNAc...) asparagine glycan is attached at Asn65. Residue Asn106 is glycosylated (N-linked (GlcNAc...) asparagine).

Belongs to the small leucine-rich proteoglycan (SLRP) family. SLRP class I subfamily. As to quaternary structure, homodimer. Forms a ternary complex with MFAP2 and ELN. The two attached glycosaminoglycan chains can be either chondroitin sulfate or dermatan sulfate. As to expression, found in several connective tissues, especially in articular cartilages.

The protein resides in the secreted. Its subcellular location is the extracellular space. The protein localises to the extracellular matrix. May be involved in collagen fiber assembly. The protein is Biglycan (BGN) of Oryctolagus cuniculus (Rabbit).